The sequence spans 296 residues: tRNA dimethylallyltransferase (296 aa).

10 to 17 (GPTASGKT) provides a ligand contact to ATP. 12–17 (TASGKT) is a binding site for substrate. Positions 35–38 (DSRQ) are interaction with substrate tRNA.

Belongs to the IPP transferase family. Monomer. Mg(2+) is required as a cofactor.

It catalyses the reaction adenosine(37) in tRNA + dimethylallyl diphosphate = N(6)-dimethylallyladenosine(37) in tRNA + diphosphate. Functionally, catalyzes the transfer of a dimethylallyl group onto the adenine at position 37 in tRNAs that read codons beginning with uridine, leading to the formation of N6-(dimethylallyl)adenosine (i(6)A). The sequence is that of tRNA dimethylallyltransferase from Synechococcus sp. (strain RCC307).